A 94-amino-acid chain; its full sequence is MSAEPEVRLTAWVHGRVQGVGFRWWTRSRALELGLTGFAANKPDGRVQVVAQGSREECERLLGLLEGGDTPGRVDKVIADWSDAREQITGFHER.

The 87-residue stretch at 8 to 94 folds into the Acylphosphatase-like domain; sequence RLTAWVHGRV…REQITGFHER (87 aa). Catalysis depends on residues Arg23 and Asn41.

This sequence belongs to the acylphosphatase family.

The enzyme catalyses an acyl phosphate + H2O = a carboxylate + phosphate + H(+). The chain is Acylphosphatase (acyP) from Mycobacterium sp. (strain JLS).